The chain runs to 488 residues: Rhamnulokinase (488 aa).

Position 11–15 (11–15 (ASSGR)) interacts with ATP. Substrate is bound by residues alanine 79 and 234 to 236 (HDT). Residue aspartate 235 is the Proton acceptor of the active site. Threonine 257 serves as a coordination point for ATP. Asparagine 294 serves as a coordination point for substrate. Residues glutamine 302 and glycine 401 each coordinate ATP.

The protein belongs to the rhamnulokinase family. Mg(2+) serves as cofactor.

The enzyme catalyses L-rhamnulose + ATP = L-rhamnulose 1-phosphate + ADP + H(+). Its pathway is carbohydrate degradation; L-rhamnose degradation; glycerone phosphate from L-rhamnose: step 2/3. In terms of biological role, involved in the catabolism of L-rhamnose (6-deoxy-L-mannose). Catalyzes the transfer of the gamma-phosphate group from ATP to the 1-hydroxyl group of L-rhamnulose to yield L-rhamnulose 1-phosphate. The protein is Rhamnulokinase of Lactiplantibacillus plantarum (strain ATCC BAA-793 / NCIMB 8826 / WCFS1) (Lactobacillus plantarum).